Here is a 420-residue protein sequence, read N- to C-terminus: NEDD8-specific protease 1 (420 aa).

Positions 257–281 (KSSDSSETSHESSNSNLKKSSESGS) are enriched in low complexity. The disordered stretch occupies residues 257–420 (KSSDSSETSH…EELVSGDFPF (164 aa)). The span at 286–296 (NNHESDKDLHH) shows a compositional bias: basic and acidic residues. Positions 297 to 310 (EGHHHHHHHHHHHH) are enriched in basic residues. The segment covering 311-324 (SHDDDPSSPAEKKQ) has biased composition (basic and acidic residues). Phosphoserine occurs at positions 329, 340, and 351. The segment covering 355–377 (NKEDHLPLLSDEKLDKSAIDKIE) has biased composition (basic and acidic residues).

It belongs to the peptidase C48 family. Interacts with csn1. It is, however, not a component of the signalosome.

The protein resides in the cytoplasm. In terms of biological role, protease that catalyzes two essential functions in the NEDD8 pathway: processing of full-length NEDD8 to its mature form and deconjugation of NEDD8 from targeted proteins such as the pcu1, pcu2 and pcu4 cullins and other proteins. The chain is NEDD8-specific protease 1 (nep1) from Schizosaccharomyces pombe (strain 972 / ATCC 24843) (Fission yeast).